The chain runs to 220 residues: Redox-sensing transcriptional repressor Rex (220 aa).

A DNA-binding region (H-T-H motif) is located at residues 25 to 64; it reads WYLSNVKLLKQRGERFVSSTQISKEINIDASQIAKDLSYV. 99–104 serves as a coordination point for NAD(+); the sequence is GVGSLG.

This sequence belongs to the transcriptional regulatory Rex family. As to quaternary structure, homodimer.

It is found in the cytoplasm. Functionally, modulates transcription in response to changes in cellular NADH/NAD(+) redox state. The polypeptide is Redox-sensing transcriptional repressor Rex (Bacteroides thetaiotaomicron (strain ATCC 29148 / DSM 2079 / JCM 5827 / CCUG 10774 / NCTC 10582 / VPI-5482 / E50)).